A 278-amino-acid polypeptide reads, in one-letter code: Orotidine 5'-phosphate decarboxylase (278 aa).

Residue K95 is the Proton donor of the active site.

This sequence belongs to the OMP decarboxylase family. Type 2 subfamily.

The enzyme catalyses orotidine 5'-phosphate + H(+) = UMP + CO2. The protein operates within pyrimidine metabolism; UMP biosynthesis via de novo pathway; UMP from orotate: step 2/2. This chain is Orotidine 5'-phosphate decarboxylase, found in Mycobacterium marinum (strain ATCC BAA-535 / M).